The primary structure comprises 214 residues: Probable transaldolase (214 aa).

Lys-83 (schiff-base intermediate with substrate) is an active-site residue.

Belongs to the transaldolase family. Type 3B subfamily.

The protein resides in the cytoplasm. The enzyme catalyses D-sedoheptulose 7-phosphate + D-glyceraldehyde 3-phosphate = D-erythrose 4-phosphate + beta-D-fructose 6-phosphate. Its pathway is carbohydrate degradation; pentose phosphate pathway; D-glyceraldehyde 3-phosphate and beta-D-fructose 6-phosphate from D-ribose 5-phosphate and D-xylulose 5-phosphate (non-oxidative stage): step 2/3. Functionally, transaldolase is important for the balance of metabolites in the pentose-phosphate pathway. This Geobacter metallireducens (strain ATCC 53774 / DSM 7210 / GS-15) protein is Probable transaldolase.